Consider the following 91-residue polypeptide: DNA/RNA-binding protein Alba (91 aa).

Position 11 is an N6-acetyllysine (Lys-11).

This sequence belongs to the histone-like Alba family. Acetylated. Acetylation at Lys-11 decreases DNA-binding affinity.

It localises to the cytoplasm. The protein resides in the chromosome. Functionally, binds double-stranded DNA tightly but without sequence specificity. Incubation with DNA in vitro gives fibrous structures 10.3 +/- 1.1 nm in thickness (naked DNA is 1.83 +/- 0.37 nm). This protein does not significantly compact DNA. This chain is DNA/RNA-binding protein Alba, found in Thermococcus kodakarensis (strain ATCC BAA-918 / JCM 12380 / KOD1) (Pyrococcus kodakaraensis (strain KOD1)).